Consider the following 412-residue polypeptide: Glutamate-1-semialdehyde 2,1-aminomutase (412 aa).

Lys260 is modified (N6-(pyridoxal phosphate)lysine).

This sequence belongs to the class-III pyridoxal-phosphate-dependent aminotransferase family. HemL subfamily. The cofactor is pyridoxal 5'-phosphate.

It is found in the cytoplasm. The catalysed reaction is (S)-4-amino-5-oxopentanoate = 5-aminolevulinate. It functions in the pathway porphyrin-containing compound metabolism; protoporphyrin-IX biosynthesis; 5-aminolevulinate from L-glutamyl-tRNA(Glu): step 2/2. This chain is Glutamate-1-semialdehyde 2,1-aminomutase, found in Methanocorpusculum labreanum (strain ATCC 43576 / DSM 4855 / Z).